A 498-amino-acid polypeptide reads, in one-letter code: Cyclin-L1 (498 aa).

Cyclin-like regions lie at residues 68-169 (ERIQ…RILK) and 182-266 (KIIV…NTMK). A disordered region spans residues 294 to 498 (LKARGQNPNG…SGHSHSRHRR (205 aa)). A compositionally biased stretch (polar residues) spans 311-320 (NGFSPASKPS). A compositionally biased stretch (basic and acidic residues) spans 321–341 (SPRDVKMDDKSPNSKLKEPEN). The segment at 366-396 (KNHSRSRSRSTSRSPHRHRRSHSGTYSSHSS) is RS. Over residues 367-387 (NHSRSRSRSTSRSPHRHRRSH) the composition is skewed to basic residues. The span at 388–402 (SGTYSSHSSHSPSPR) shows a compositional bias: low complexity. Phosphoserine occurs at positions 409 and 412. Basic and acidic residues predominate over residues 415 to 426 (RTDRDRPSETSR). Residues 427 to 440 (HSNKRRRSRSRSRS) are compositionally biased toward basic residues. The span at 441 to 478 (NSRERVRDRDHIKHKQERSGSGHHWDHRDRERDRSRDH) shows a compositional bias: basic and acidic residues. Over residues 479–498 (GRNKRQSRSHSGHSHSRHRR) the composition is skewed to basic residues.

Belongs to the cyclin family. Cyclin L subfamily.

It is found in the nucleus speckle. The protein resides in the nucleus. It localises to the nucleoplasm. In terms of biological role, involved in pre-mRNA splicing. The protein is Cyclin-L1 (ccnl1) of Danio rerio (Zebrafish).